Reading from the N-terminus, the 218-residue chain is UPF0301 protein RPB_4502 (218 aa).

The tract at residues methionine 1–glutamine 26 is disordered.

It belongs to the UPF0301 (AlgH) family.

This Rhodopseudomonas palustris (strain HaA2) protein is UPF0301 protein RPB_4502.